The following is a 786-amino-acid chain: Endonuclease MutS2 (786 aa).

An ATP-binding site is contributed by 333-340 (GPNTGGKT). Residues 682–709 (EKIKPSKQSAAQRPVVKVSGGGMSGPST) are disordered. The 76-residue stretch at 711–786 (LDLRGERYDQ…GSGATIVNFK (76 aa)) folds into the Smr domain.

Belongs to the DNA mismatch repair MutS family. MutS2 subfamily. As to quaternary structure, homodimer. Binds to stalled ribosomes, contacting rRNA.

Endonuclease that is involved in the suppression of homologous recombination and thus may have a key role in the control of bacterial genetic diversity. Its function is as follows. Acts as a ribosome collision sensor, splitting the ribosome into its 2 subunits. Detects stalled/collided 70S ribosomes which it binds and splits by an ATP-hydrolysis driven conformational change. Acts upstream of the ribosome quality control system (RQC), a ribosome-associated complex that mediates the extraction of incompletely synthesized nascent chains from stalled ribosomes and their subsequent degradation. Probably generates substrates for RQC. This chain is Endonuclease MutS2, found in Lacticaseibacillus casei (strain BL23) (Lactobacillus casei).